The chain runs to 373 residues: Maltose/maltodextrin import ATP-binding protein MalK (373 aa).

In terms of domain architecture, ABC transporter spans 4–234; sequence VTLKNVCKAY…PQNRFVAGFI (231 aa). 36–43 serves as a coordination point for ATP; that stretch reads GPSGCGKS.

It belongs to the ABC transporter superfamily. Maltooligosaccharide importer (TC 3.A.1.1.1) family. In terms of assembly, the complex is composed of two ATP-binding proteins (MalK), two transmembrane proteins (MalG and MalK) and a solute-binding protein (MalE).

Its subcellular location is the cell inner membrane. It carries out the reaction D-maltose(out) + ATP + H2O = D-maltose(in) + ADP + phosphate + H(+). Its function is as follows. Part of the ABC transporter complex MalEFGK involved in maltose/maltodextrin import. Responsible for energy coupling to the transport system. The sequence is that of Maltose/maltodextrin import ATP-binding protein MalK from Vibrio cholerae serotype O1 (strain ATCC 39315 / El Tor Inaba N16961).